A 785-amino-acid polypeptide reads, in one-letter code: Endonuclease MutS2 (785 aa).

332–339 (GPNTGGKT) contacts ATP. The Smr domain maps to 710-785 (IDLRGLDAEE…GDGATIVELK (76 aa)).

This sequence belongs to the DNA mismatch repair MutS family. MutS2 subfamily. As to quaternary structure, homodimer. Binds to stalled ribosomes, contacting rRNA.

Functionally, endonuclease that is involved in the suppression of homologous recombination and thus may have a key role in the control of bacterial genetic diversity. Its function is as follows. Acts as a ribosome collision sensor, splitting the ribosome into its 2 subunits. Detects stalled/collided 70S ribosomes which it binds and splits by an ATP-hydrolysis driven conformational change. Acts upstream of the ribosome quality control system (RQC), a ribosome-associated complex that mediates the extraction of incompletely synthesized nascent chains from stalled ribosomes and their subsequent degradation. Probably generates substrates for RQC. In Clostridium botulinum (strain Alaska E43 / Type E3), this protein is Endonuclease MutS2.